Consider the following 76-residue polypeptide: UPF0248 protein MmarC5_1387 (76 aa).

This sequence belongs to the UPF0248 family.

The polypeptide is UPF0248 protein MmarC5_1387 (Methanococcus maripaludis (strain C5 / ATCC BAA-1333)).